Here is an 82-residue protein sequence, read N- to C-terminus: MAIDRAQNLQDTFLNHVRKTKTPLTIFLVNGVKLQGIVTWFDNFCLLLRRDGHSQLVYKHAISTIMPGAPIQLFEGGEDAPL.

The Sm domain maps to 11-71 (DTFLNHVRKT…ISTIMPGAPI (61 aa)).

The protein belongs to the Hfq family. As to quaternary structure, homohexamer.

Functionally, RNA chaperone that binds small regulatory RNA (sRNAs) and mRNAs to facilitate mRNA translational regulation in response to envelope stress, environmental stress and changes in metabolite concentrations. Also binds with high specificity to tRNAs. This chain is RNA-binding protein Hfq, found in Nitrobacter winogradskyi (strain ATCC 25391 / DSM 10237 / CIP 104748 / NCIMB 11846 / Nb-255).